A 675-amino-acid polypeptide reads, in one-letter code: Mitochondrial distribution and morphology protein 12 (675 aa).

The 675-residue stretch at 1 to 675 folds into the SMP-LTD domain; it reads MSIDLNWDTV…VYPSFWTFLV (675 aa). Disordered regions lie at residues 66 to 186, 241 to 270, 307 to 327, 365 to 390, and 444 to 517; these read LPDF…GTNH, GPSWIADQQQQQQQQNNMLPGGAGGGGAGG, GTGKPTPGPSPLTGTSTPLGT, TGPRHKRNPSSQSLNSVGDYSPVAPA, and PKQG…RFRE. Residues 78–101 are compositionally biased toward acidic residues; the sequence is SSEESDSEEEVAYENEGEYLDDPV. Low complexity predominate over residues 123–137; that stretch reads NSSTGSRNGSGPNSG. The segment covering 261 to 270 has biased composition (gly residues); that stretch reads GGAGGGGAGG. The span at 317–327 shows a compositional bias: low complexity; the sequence is PLTGTSTPLGT. Polar residues-rich tracts occupy residues 373-382 and 454-469; these read PSSQSLNSVG and VSTLAPNSAGTSNNRA. Positions 497–510 are enriched in acidic residues; sequence EPEEDEEEEEEGEE.

The protein belongs to the MDM12 family. As to quaternary structure, component of the ER-mitochondria encounter structure (ERMES) or MDM complex, composed of mmm-1, mdm10, mdm12 and mdm34. A mmm-1 homodimer associates with one molecule of mdm12 on each side in a pairwise head-to-tail manner, and the SMP-LTD domains of mmm-1 and mdm12 generate a continuous hydrophobic tunnel for phospholipid trafficking.

Its subcellular location is the mitochondrion outer membrane. It localises to the endoplasmic reticulum membrane. Its function is as follows. Component of the ERMES/MDM complex, which serves as a molecular tether to connect the endoplasmic reticulum (ER) and mitochondria. Components of this complex are involved in the control of mitochondrial shape and protein biogenesis, and function in nonvesicular lipid trafficking between the ER and mitochondria. Mdm12 is required for the interaction of the ER-resident membrane protein MMM1 and the outer mitochondrial membrane-resident beta-barrel protein mdm10. The mdm12-mmm-1 subcomplex functions in the major beta-barrel assembly pathway that is responsible for biogenesis of all mitochondrial outer membrane beta-barrel proteins, and acts in a late step after the SAM complex. The mdm10-mdm12-mmm-1 subcomplex further acts in the TOM40-specific pathway after the action of the mdm12-mmm1 complex. Essential for establishing and maintaining the structure of mitochondria and maintenance of mtDNA nucleoids. This chain is Mitochondrial distribution and morphology protein 12, found in Neurospora crassa (strain ATCC 24698 / 74-OR23-1A / CBS 708.71 / DSM 1257 / FGSC 987).